The primary structure comprises 67 residues: Large ribosomal subunit protein bL35 (67 aa).

Residues 22 to 52 (VLAGPGKKRHNLSARSQKAKRQNRGSQVLTH) form a disordered region. Residues 27 to 44 (GKKRHNLSARSQKAKRQN) show a composition bias toward basic residues.

This sequence belongs to the bacterial ribosomal protein bL35 family.

This chain is Large ribosomal subunit protein bL35, found in Granulibacter bethesdensis (strain ATCC BAA-1260 / CGDNIH1).